We begin with the raw amino-acid sequence, 433 residues long: Eukaryotic peptide chain release factor subunit 1 (433 aa).

Residue Gln-182 is modified to N5-methylglutamine. Ser-425 carries the post-translational modification Phosphoserine.

It belongs to the eukaryotic release factor 1 family. In terms of assembly, component of the eRF1-eRF3-GTP ternary complex, composed of sup45/eRF1, sup35/eRF3 and GTP.

Its subcellular location is the cytoplasm. Component of the eRF1-eRF3-GTP ternary complex, a ternary complex that mediates translation termination in response to the termination codons. The eRF1-eRF3-GTP complex binds to a stop codon in the ribosomal A-site. Sup45/eRF1 is responsible for stop codon recognition and inducing hydrolysis of peptidyl-tRNA. Following GTP hydrolysis by sup35/eRF3, sup35/eRF3 dissociates, permitting sup45/eRF1 to accommodate fully in the A-site. The chain is Eukaryotic peptide chain release factor subunit 1 (sup45) from Schizosaccharomyces pombe (strain 972 / ATCC 24843) (Fission yeast).